The primary structure comprises 149 residues: Calmodulin-like protein (149 aa).

4 EF-hand domains span residues 6–41 (TTQA…VGSN), 42–76 (PTQQ…KMKY), 78–113 (DSEA…IGEK), and 113–148 (KLTK…SKSF). Residues Asp-19, Asp-21, Asp-23, Lys-25, and Glu-30 each coordinate Ca(2+).

It belongs to the calmodulin family.

It localises to the contractile vacuole. Its function is as follows. Mediates the control of a large number of enzymes, ion channels and other proteins by Ca(2+) ions. Among the enzymes to be stimulated by the calmodulin-Ca(2+) complex are a number of protein kinases and phosphatases. This Dictyostelium discoideum (Social amoeba) protein is Calmodulin-like protein (calB).